The sequence spans 325 residues: Putative 1-aminocyclopropane-1-carboxylate deaminase (325 aa).

An N6-(pyridoxal phosphate)lysine modification is found at Lys-54.

Belongs to the ACC deaminase/D-cysteine desulfhydrase family. The cofactor is pyridoxal 5'-phosphate.

The catalysed reaction is 1-aminocyclopropane-1-carboxylate + H2O = 2-oxobutanoate + NH4(+). This is Putative 1-aminocyclopropane-1-carboxylate deaminase from Pyrococcus horikoshii (strain ATCC 700860 / DSM 12428 / JCM 9974 / NBRC 100139 / OT-3).